Here is a 118-residue protein sequence, read N- to C-terminus: Eukaryotic translation initiation factor 4E-binding protein 1 (118 aa).

At Ser2 the chain carries N-acetylserine. The disordered stretch occupies residues 27–48 (VQLPPGDYSTTPGGTLFSTTPG). Residues 34–48 (YSTTPGGTLFSTTPG) show a composition bias toward polar residues. A Phosphothreonine; by MTOR modification is found at Thr37. Thr41 bears the Phosphothreonine mark. The residue at position 44 (Ser44) is a Phosphoserine. Thr46 carries the phosphothreonine; by MTOR modification. Phosphothreonine is present on Thr50. Position 54 is a phosphotyrosine (Tyr54). Positions 54-60 (YDRKFLM) match the YXXXXLphi motif motif. Residue Lys57 forms a Glycyl lysine isopeptide (Lys-Gly) (interchain with G-Cter in ubiquitin) linkage. The segment at 64–118 (NSPVTKTPPRDLPTIPGVTSPTGDEPPTEARQNHLRSSPEDKPAGGEESQFEMDI) is disordered. The residue at position 65 (Ser65) is a Phosphoserine; by DYRK2, MAPK1, MAPK3 and MTOR. Phosphothreonine; by MTOR is present on Thr70. Position 77 is a phosphothreonine (Thr77). Residues Ser83 and Ser100 each carry the phosphoserine modification. Position 101 is a phosphoserine; by DYRK2 (Ser101). A Phosphoserine modification is found at Ser112. The short motif at 114–118 (FEMDI) is the TOS motif element.

This sequence belongs to the eIF4E-binding protein family. In terms of assembly, hypophosphorylated EIF4EBP1 competes with EIF4G1/EIF4G3 to interact with EIF4E; insulin stimulated MAP-kinase (MAPK1 and MAPK3) or mTORC1 phosphorylation of EIF4EBP1 causes dissociation of the complex allowing EIF4G1/EIF4G3 to bind and consequent initiation of translation. Interacts (via TOS motif) with RPTOR; promoting phosphorylation by mTORC1. In terms of processing, phosphorylated on serine and threonine residues in response to insulin, EGF and PDGF. Phosphorylation at Thr-37, Thr-46, Ser-65 and Thr-70, corresponding to the hyperphosphorylated form, is regulated by mTORC1 and abolishes binding to EIF4E. Ubiquitinated: when eIF4E levels are low, hypophosphorylated form is ubiquitinated by the BCR(KLHL25) complex, leading to its degradation and serving as a homeostatic mechanism to maintain translation and prevent eIF4E inhibition when eIF4E levels are low. Not ubiquitinated when hyperphosphorylated (at Thr-37, Thr-46, Ser-65 and Thr-70) or associated with eIF4E.

Its subcellular location is the cytoplasm. The protein localises to the nucleus. Its function is as follows. Repressor of translation initiation that regulates EIF4E activity by preventing its assembly into the eIF4F complex: hypophosphorylated form competes with EIF4G1/EIF4G3 and strongly binds to EIF4E, leading to repress translation. In contrast, hyperphosphorylated form dissociates from EIF4E, allowing interaction between EIF4G1/EIF4G3 and EIF4E, leading to initiation of translation. Mediates the regulation of protein translation by hormones, growth factors and other stimuli that signal through the MAP kinase and mTORC1 pathways. In Bos taurus (Bovine), this protein is Eukaryotic translation initiation factor 4E-binding protein 1 (EIF4EBP1).